The chain runs to 352 residues: 4-hydroxy-3-methylbut-2-en-1-yl diphosphate synthase (flavodoxin) (352 aa).

[4Fe-4S] cluster is bound by residues Cys-262, Cys-265, Cys-297, and Glu-304.

It belongs to the IspG family. [4Fe-4S] cluster is required as a cofactor.

It carries out the reaction (2E)-4-hydroxy-3-methylbut-2-enyl diphosphate + oxidized [flavodoxin] + H2O + 2 H(+) = 2-C-methyl-D-erythritol 2,4-cyclic diphosphate + reduced [flavodoxin]. It functions in the pathway isoprenoid biosynthesis; isopentenyl diphosphate biosynthesis via DXP pathway; isopentenyl diphosphate from 1-deoxy-D-xylulose 5-phosphate: step 5/6. In terms of biological role, converts 2C-methyl-D-erythritol 2,4-cyclodiphosphate (ME-2,4cPP) into 1-hydroxy-2-methyl-2-(E)-butenyl 4-diphosphate. This is 4-hydroxy-3-methylbut-2-en-1-yl diphosphate synthase (flavodoxin) from Nitratiruptor sp. (strain SB155-2).